The following is a 760-amino-acid chain: uncharacterized protein (760 aa).

Residues 578–587 (RNRKQSKLRI) show a composition bias toward basic residues. The segment at 578–604 (RNRKQSKLRISKQQEIQPQKEESVKKE) is disordered. A compositionally biased stretch (basic and acidic residues) spans 595-604 (PQKEESVKKE).

The protein resides in the mitochondrion. This is an uncharacterized protein from Dictyostelium citrinum (Slime mold).